A 479-amino-acid chain; its full sequence is tRNA modification GTPase MnmE (479 aa).

Residues Arg30, Glu91, and Lys130 each coordinate (6S)-5-formyl-5,6,7,8-tetrahydrofolate. In terms of domain architecture, TrmE-type G spans 226-402 (GFRIVLTGLP…VLKDLVKEFA (177 aa)). Asn236 contacts K(+). GTP is bound by residues 236-241 (NVGKSS), 255-261 (TDIPGTT), and 280-283 (DTAG). Ser240 provides a ligand contact to Mg(2+). K(+) is bound by residues Thr255, Ile257, and Thr260. Position 261 (Thr261) interacts with Mg(2+). Residue Lys479 participates in (6S)-5-formyl-5,6,7,8-tetrahydrofolate binding.

It belongs to the TRAFAC class TrmE-Era-EngA-EngB-Septin-like GTPase superfamily. TrmE GTPase family. Homodimer. Heterotetramer of two MnmE and two MnmG subunits. It depends on K(+) as a cofactor.

The protein resides in the cytoplasm. In terms of biological role, exhibits a very high intrinsic GTPase hydrolysis rate. Involved in the addition of a carboxymethylaminomethyl (cmnm) group at the wobble position (U34) of certain tRNAs, forming tRNA-cmnm(5)s(2)U34. The sequence is that of tRNA modification GTPase MnmE from Bdellovibrio bacteriovorus (strain ATCC 15356 / DSM 50701 / NCIMB 9529 / HD100).